The primary structure comprises 350 residues: Erythronate-4-phosphate dehydrogenase (350 aa).

Residues serine 45 and threonine 66 each contribute to the substrate site. NAD(+) is bound by residues 124-125 (QV), aspartate 144, 203-205 (ASR), and aspartate 226. Arginine 205 is an active-site residue. Glutamate 231 is a catalytic residue. Catalysis depends on histidine 248, which acts as the Proton donor. NAD(+) is bound at residue glycine 251.

It belongs to the D-isomer specific 2-hydroxyacid dehydrogenase family. PdxB subfamily. As to quaternary structure, homodimer.

The protein localises to the cytoplasm. It carries out the reaction 4-phospho-D-erythronate + NAD(+) = (R)-3-hydroxy-2-oxo-4-phosphooxybutanoate + NADH + H(+). It participates in cofactor biosynthesis; pyridoxine 5'-phosphate biosynthesis; pyridoxine 5'-phosphate from D-erythrose 4-phosphate: step 2/5. Functionally, catalyzes the oxidation of erythronate-4-phosphate to 3-hydroxy-2-oxo-4-phosphonooxybutanoate. In Legionella pneumophila (strain Lens), this protein is Erythronate-4-phosphate dehydrogenase.